The chain runs to 186 residues: Ribosome-recycling factor (186 aa).

The protein belongs to the RRF family.

The protein resides in the cytoplasm. Functionally, responsible for the release of ribosomes from messenger RNA at the termination of protein biosynthesis. May increase the efficiency of translation by recycling ribosomes from one round of translation to another. This is Ribosome-recycling factor from Cytophaga hutchinsonii (strain ATCC 33406 / DSM 1761 / CIP 103989 / NBRC 15051 / NCIMB 9469 / D465).